The primary structure comprises 562 residues: MNNKIEKNDNNFIYKIINEDFKKNKNLLLHTRFPPEPNGYLHIGHAKSICLNFELANVYNGYCNLRFDDTNPVKENIKYINSIKNDIKWLGYQWHKKVRYSSEYFPILYEYAKELIQKGLAYVDELTKEEIREYRGTLSTVGKNSPYRNRSITENLKLFEKMKKGEFKEGEACLRAKINMSSSFIVMRDPVLYRIIFSTHHQTKKKWCIYPTYDFAHCLSDSIEGITHSFCTLEFQDNKNLYNWILKNTSIKHYSKQYEFSRLNLEYSILSKRKISILIEKKIVNGWDDPRILTISGLRKKGYTASSIRDFCHRIGITKQNNLIEFSMLEYCIRKELNKKAIRTMAVLEPIKIFLYNIDNDHEEKLIVPNHPKHLHLGTHEIIFTNTIYIEREDFKEKYDKKYKRLKIGEEVRLRYAYIIKAEKIEKDESGNIIKIICFCDINSLGKKPINRKNPAVIHWIAVKNSFPAKFKLYNQLFKIKNPDQEKNFLSYLNSNSLIVKNGFVEKKIAQKIIKKMSNNFIKLFFQFERTGYFCVDEVDSKENKLVFNRTVSLKDSWNLKK.

Residues 35–45 carry the 'HIGH' region motif; that stretch reads PEPNGYLHIGH. ATP-binding positions include 36-38 and 42-48; these read EPN and HIGHAKS. Positions 68 and 213 each coordinate L-glutamine. ATP is bound by residues Thr232, 262–263, and 270–272; these read RL and LSK. A 'KMSKS' region motif is present at residues 269–273; the sequence is ILSKR.

This sequence belongs to the class-I aminoacyl-tRNA synthetase family. Monomer.

It localises to the cytoplasm. The enzyme catalyses tRNA(Gln) + L-glutamine + ATP = L-glutaminyl-tRNA(Gln) + AMP + diphosphate. This chain is Glutamine--tRNA ligase, found in Buchnera aphidicola subsp. Schizaphis graminum (strain Sg).